The following is a 429-amino-acid chain: Probable M18 family aminopeptidase 2 (429 aa).

Zn(2+)-binding residues include His82, His156, and His401.

Belongs to the peptidase M18 family. Zn(2+) serves as cofactor.

This chain is Probable M18 family aminopeptidase 2, found in Pseudomonas paraeruginosa (strain DSM 24068 / PA7) (Pseudomonas aeruginosa (strain PA7)).